We begin with the raw amino-acid sequence, 209 residues long: Uracil phosphoribosyltransferase (209 aa).

Residues Arg79, Arg104, and 131 to 139 contribute to the 5-phospho-alpha-D-ribose 1-diphosphate site; that span reads DPMLATGGS. Uracil is bound by residues Ile194 and 199–201; that span reads GDA. Asp200 is a 5-phospho-alpha-D-ribose 1-diphosphate binding site.

It belongs to the UPRTase family. Mg(2+) is required as a cofactor.

It catalyses the reaction UMP + diphosphate = 5-phospho-alpha-D-ribose 1-diphosphate + uracil. Its pathway is pyrimidine metabolism; UMP biosynthesis via salvage pathway; UMP from uracil: step 1/1. Allosterically activated by GTP. Catalyzes the conversion of uracil and 5-phospho-alpha-D-ribose 1-diphosphate (PRPP) to UMP and diphosphate. The chain is Uracil phosphoribosyltransferase from Pediococcus pentosaceus (strain ATCC 25745 / CCUG 21536 / LMG 10740 / 183-1w).